The primary structure comprises 494 residues: Protein DETOXIFICATION 22 (494 aa).

12 consecutive transmembrane segments (helical) span residues 40–60 (LWVV…VSLV), 78–98 (ITFT…ASAL), 123–143 (IVLT…GPIL), 159–179 (IALW…CQIF), 188–208 (IIAY…WLLV), 217–237 (GAMT…LLYV), 268–288 (GGMV…TGNL), 299–319 (AICI…LAAV), 340–360 (IVAV…FLFL), 384–404 (LLAF…VAVG), 416–436 (LACY…VVGL), and 441–461 (VWIG…IMTL).

It belongs to the multi antimicrobial extrusion (MATE) (TC 2.A.66.1) family.

It is found in the membrane. The protein is Protein DETOXIFICATION 22 of Arabidopsis thaliana (Mouse-ear cress).